A 571-amino-acid chain; its full sequence is NADH-quinone oxidoreductase subunit C/D (571 aa).

The NADH dehydrogenase I subunit C stretch occupies residues 1–171 (MQASEKTLNE…NLSNTMNYRR (171 aa)). The NADH dehydrogenase I subunit D stretch occupies residues 194-571 (AQVVLNWGPL…LDPVVGEVDR (378 aa)).

It in the N-terminal section; belongs to the complex I 30 kDa subunit family. In the C-terminal section; belongs to the complex I 49 kDa subunit family. NDH-1 is composed of 13 different subunits. Subunits NuoB, CD, E, F, and G constitute the peripheral sector of the complex.

Its subcellular location is the cell inner membrane. It carries out the reaction a quinone + NADH + 5 H(+)(in) = a quinol + NAD(+) + 4 H(+)(out). Its function is as follows. NDH-1 shuttles electrons from NADH, via FMN and iron-sulfur (Fe-S) centers, to quinones in the respiratory chain. The immediate electron acceptor for the enzyme in this species is believed to be ubiquinone. Couples the redox reaction to proton translocation (for every two electrons transferred, four hydrogen ions are translocated across the cytoplasmic membrane), and thus conserves the redox energy in a proton gradient. This chain is NADH-quinone oxidoreductase subunit C/D (nuoC), found in Hydrogenobaculum sp. (strain Y04AAS1).